Here is a 465-residue protein sequence, read N- to C-terminus: Sodium-coupled neutral amino acid transporter 7 (465 aa).

Transmembrane regions (helical) follow at residues 54 to 74 (AVFI…PAAF), 82 to 102 (AGVT…VILA), 128 to 148 (ICEL…LIII), 177 to 197 (FTIT…KEIG), 204 to 224 (TLSV…YIWP), 244 to 264 (FNAM…VPVF), 275 to 295 (WWGV…GTGV), 318 to 338 (VAVA…YPIL), 370 to 390 (ILQT…IPDI), 394 to 414 (ISLI…LCLI), and 427 to 447 (SWNA…FIFG).

This sequence belongs to the amino acid/polyamine transporter 2 family.

It localises to the lysosome membrane. The protein localises to the cell projection. It is found in the axon. It catalyses the reaction L-asparagine(in) + Na(+)(in) = L-asparagine(out) + Na(+)(out). The enzyme catalyses L-glutamine(in) + Na(+)(in) = L-glutamine(out) + Na(+)(out). Symporter that selectively cotransports sodium ions and amino acids, such as L-glutamine and L-asparagine from the lysosome into the cytoplasm and may participates in mTORC1 activation. The transport activity requires an acidic lysosomal lumen. This Danio rerio (Zebrafish) protein is Sodium-coupled neutral amino acid transporter 7.